The chain runs to 149 residues: Putative glycine cleavage system H protein 3 (149 aa).

In terms of domain architecture, Lipoyl-binding spans 39–121; it reads TCTLGITKYA…EDKGWLIKME (83 aa). Lysine 80 carries the post-translational modification N6-lipoyllysine.

Belongs to the GcvH family. The glycine cleavage system is composed of four proteins: P, T, L and H. It depends on (R)-lipoate as a cofactor.

Functionally, the glycine cleavage system catalyzes the degradation of glycine. The H protein shuttles the methylamine group of glycine from the P protein to the T protein. This chain is Putative glycine cleavage system H protein 3 (gcvH3), found in Dictyostelium discoideum (Social amoeba).